Consider the following 454-residue polypeptide: Innexin-19 (454 aa).

The Cytoplasmic segment spans residues 1-48; that stretch reads MWRTPASTGPLRQDRQMFFHATLARSFINALSVRGDDDAVDRLNYYYT. A helical transmembrane segment spans residues 49 to 69; it reads PLILAVCCLVISAKQYGGTPI. Residues 70–118 lie on the Extracellular side of the membrane; sequence ECWVNPHSRESMEEYIESYCWIQNTYWIPMYENVPDDHTAREEKQIGYY. A helical transmembrane segment spans residues 119 to 139; sequence QWVPFILIAEALMFSLPCIFW. The Cytoplasmic segment spans residues 140-214; sequence RLCSFQSGLN…SRFLSGQCLS (75 aa). A helical transmembrane segment spans residues 215 to 235; it reads ILHSFTKLLYSMNVVAQFLIL. Topologically, residues 236 to 300 are extracellular; the sequence is NACLKSSDFL…ALLINIINEK (65 aa). Residues 301–321 traverse the membrane as a helical segment; it reads VFAFLWCWYMILAIITTCSFI. Residues 322–454 lie on the Cytoplasmic side of the membrane; that stretch reads YWIANSFIHS…SNPGQTKSFL (133 aa).

Belongs to the pannexin family. As to expression, specifically expressed in sensory neurons and interneurons in the head and tail. Expressed in neurons AWC, ASH, AFD, ASI, ADL, ASK, BAG, AWB, and ADF (head sensory neurons); ADA, AIZ, RIC, AIY, and AIM (head interneurons); PHA and PHB (tail sensory neurons); and PVC and PVQ (tail interneurons).

It localises to the cell membrane. The protein resides in the cell junction. It is found in the gap junction. Its function is as follows. Structural component of the gap junctions that specifically coordinates left-right asymmetry in the developing nervous system. Acts by forming gap junction network linking embryonic neurons and providing electrical coupling between cells, leading to promote or inhibit AWC signaling. Required for the left and right AWC olfactory neurons to establish asymmetric patterns of gene expression during embryogenesis. Acts autonomously. The sequence is that of Innexin-19 (inx-19) from Caenorhabditis elegans.